The chain runs to 96 residues: Co-chaperonin GroES (96 aa).

The protein belongs to the GroES chaperonin family. As to quaternary structure, heptamer of 7 subunits arranged in a ring. Interacts with the chaperonin GroEL.

The protein localises to the cytoplasm. Together with the chaperonin GroEL, plays an essential role in assisting protein folding. The GroEL-GroES system forms a nano-cage that allows encapsulation of the non-native substrate proteins and provides a physical environment optimized to promote and accelerate protein folding. GroES binds to the apical surface of the GroEL ring, thereby capping the opening of the GroEL channel. In Legionella jeonii, this protein is Co-chaperonin GroES.